Consider the following 381-residue polypeptide: Chaperone protein DnaJ (381 aa).

The J domain maps to 3–66 (DYYETLGVER…DKRRMYDSGV (64 aa)). Residues 129–211 (GGTAHVKINT…CMGHGRVRTT (83 aa)) form a CR-type zinc finger. Positions 142, 145, 159, 162, 185, 188, 199, and 202 each coordinate Zn(2+). CXXCXGXG motif repeat units lie at residues 142–149 (CQECGGSG), 159–166 (CPDCHGQG), 185–192 (CERCEGHG), and 199–206 (CPSCMGHG). Positions 355 to 381 (ATHVSQASRPQAGQKKGFFSKLKDALS) are disordered. Over residues 356–365 (THVSQASRPQ) the composition is skewed to polar residues.

It belongs to the DnaJ family. As to quaternary structure, homodimer. Requires Zn(2+) as cofactor.

The protein localises to the cytoplasm. Its function is as follows. Participates actively in the response to hyperosmotic and heat shock by preventing the aggregation of stress-denatured proteins and by disaggregating proteins, also in an autonomous, DnaK-independent fashion. Unfolded proteins bind initially to DnaJ; upon interaction with the DnaJ-bound protein, DnaK hydrolyzes its bound ATP, resulting in the formation of a stable complex. GrpE releases ADP from DnaK; ATP binding to DnaK triggers the release of the substrate protein, thus completing the reaction cycle. Several rounds of ATP-dependent interactions between DnaJ, DnaK and GrpE are required for fully efficient folding. Also involved, together with DnaK and GrpE, in the DNA replication of plasmids through activation of initiation proteins. The protein is Chaperone protein DnaJ of Bifidobacterium longum (strain NCC 2705).